We begin with the raw amino-acid sequence, 440 residues long: Doublesex- and mab-3-related transcription factor A2 (440 aa).

The segment at residues 59–106 (CARCRNHGVVSALKGHKRYCRWKDCMCAKCTLIAERQRVMAAQVALRR) is a DNA-binding region (DM). A disordered region spans residues 167–261 (PKTPLPGTVT…SPSSAASRQM (95 aa)). A compositionally biased stretch (basic and acidic residues) spans 199–213 (DMRHGSGSENGDRES). The span at 229–241 (TPGSISPIGSDSG) shows a compositional bias: low complexity. The span at 251–261 (PSPSSAASRQM) shows a compositional bias: polar residues. The DMA domain maps to 261-296 (MNAIDILTRVFPNHKRSVLELVLQGCGKNVVQAIEQ).

The protein belongs to the DMRT family. In terms of tissue distribution, restrictively expressed in brain and developing germ cells, especially in spermatogonia, spermatocytes, spermatids, and sperm cells, and in developing oocytes, including early perinucleolus stage oocyte, late yolk vesicle stage oocyte, and oil drop stage oocyte.

The protein resides in the nucleus. In terms of biological role, may be involved in sexual development. The sequence is that of Doublesex- and mab-3-related transcription factor A2 (dmrta2) from Danio rerio (Zebrafish).